Here is a 382-residue protein sequence, read N- to C-terminus: SAT4 family membrane protein (382 aa).

Residues 1–22 (MFGAELVGRETGGQSTDQPYSY) are disordered. Asn-78 is a glycosylation site (N-linked (GlcNAc...) asparagine). 2 consecutive transmembrane segments (helical) span residues 80–100 (SQIL…LLYL) and 112–132 (YLSI…NFFL). N-linked (GlcNAc...) asparagine glycosylation occurs at Asn-147. Helical transmembrane passes span 159 to 179 (ILVT…LPII), 192 to 212 (LGIS…IMRL), and 228 to 248 (WYTE…PTFF). The N-linked (GlcNAc...) asparagine glycan is linked to Asn-269.

Belongs to the SAT4 family.

The protein resides in the membrane. The chain is SAT4 family membrane protein from Emericella nidulans (strain FGSC A4 / ATCC 38163 / CBS 112.46 / NRRL 194 / M139) (Aspergillus nidulans).